The primary structure comprises 167 residues: uncharacterized protein (167 aa).

2 helical membrane passes run 21–41 (KIGL…IYKP) and 87–107 (MIIT…YVFG). The segment covering 136-159 (RKQRLKEQREKKEQKKEQKKEKKT) has biased composition (basic and acidic residues). Residues 136-167 (RKQRLKEQREKKEQKKEQKKEKKTERRKKKKL) form a disordered region.

It is found in the membrane. This is an uncharacterized protein from Schizosaccharomyces pombe (strain 972 / ATCC 24843) (Fission yeast).